The sequence spans 339 residues: MTQAQTAAVQPAAIPVAAPASQRWRVADVVALFELPFNDLMFRAQQVHREHFDANAVQLSTLLSIKTGGCEEDCGYCSQSSHHDTGLKAEKLMDVDTVLDAARAAKANGASRFCMGAAWRNPKERHMPALTEMVRGVKELGLETCMTLGMLEDEQAQQLADAGLDYYNHNLDTSPEFYGQVISTRTYQDRLDTLDRVRDAGINVCCGGIIGMGESRRERAGLISQLANLNPYPESVPINNLVAIEGTPLEGTAPLDPFEFVRTIAVARITMPKAVVRLSAGREQLDDAMQAMCFLAGANSMFYGDQLLTTSNPQTQRDRALFERLGIRASQADALSDNA.

The Radical SAM core domain occupies 55 to 282 (NAVQLSTLLS…KAVVRLSAGR (228 aa)). [4Fe-4S] cluster contacts are provided by Cys-70, Cys-74, and Cys-77. Positions 114, 145, 205, and 277 each coordinate [2Fe-2S] cluster.

This sequence belongs to the radical SAM superfamily. Biotin synthase family. Homodimer. [4Fe-4S] cluster is required as a cofactor. The cofactor is [2Fe-2S] cluster.

It catalyses the reaction (4R,5S)-dethiobiotin + (sulfur carrier)-SH + 2 reduced [2Fe-2S]-[ferredoxin] + 2 S-adenosyl-L-methionine = (sulfur carrier)-H + biotin + 2 5'-deoxyadenosine + 2 L-methionine + 2 oxidized [2Fe-2S]-[ferredoxin]. It functions in the pathway cofactor biosynthesis; biotin biosynthesis; biotin from 7,8-diaminononanoate: step 2/2. Catalyzes the conversion of dethiobiotin (DTB) to biotin by the insertion of a sulfur atom into dethiobiotin via a radical-based mechanism. The chain is Biotin synthase from Burkholderia orbicola (strain MC0-3).